The chain runs to 526 residues: MTDLEKPSITGHMFDVVVIGGGISGLAAAKLLSEYKINVLVLEARDRVGGRTYTVRNEHVKWVDVGGAYVGPTQNRILRLSKELGIETYKVNVNERLVQYVKGKTYPFRGAFPPVWNPLAYLDYNNLWRTMDDMGKEIPVDAPWQARHAEEWDKITMKDLIDKICWTKTAREFAYLFVNINVTSEPHEVSALWFLWYVRQCGGTSRIFSVTNGGQERKFVGGSGQISEQIMVLLGDKVKLSSPVTYIDQTDDNIIIETLNHEHYECKYVISAIPPVLTAKIHFKPELPPERNQLIQRLPMGAVIKCMVYYKEAFWKKKDYCGCMIIEDEEAPISITLDDTKPDGSMPAIMGFILARKAERLAKLHKDIRKRKICELYAKVLGSQEALSPVHYEEKNWCEEQYSGGCYTAYFPPGIMTLYGRVIRQPVGRIYFAGTETATQWSGYMEGAVEAGERAAREVLNALGKVAKKDIWVQEPESKDVPALEITHTFLERNLPSVPGLLKITGFSTSVALLCFVLYKFKQPQS.

Met1 bears the N-acetylmethionine mark. At 1 to 497 the chain is on the cytoplasmic side; the sequence is MTDLEKPSIT…HTFLERNLPS (497 aa). Ser383 is subject to Phosphoserine. Cys406 is subject to S-8alpha-FAD cysteine. Residues 498–518 traverse the membrane as a helical; Anchor for type IV membrane protein segment; sequence VPGLLKITGFSTSVALLCFVL. Over 519-526 the chain is Mitochondrial intermembrane; the sequence is YKFKQPQS. The interval 520–522 is interaction with membrane phospholipid headgroups; it reads KFK.

It belongs to the flavin monoamine oxidase family. As to quaternary structure, monomer, homo- or heterodimer (containing two subunits of similar size). Each subunit contains a covalently bound flavin. Enzymatically active as monomer. The cofactor is FAD.

The protein resides in the mitochondrion outer membrane. It carries out the reaction a secondary aliphatic amine + O2 + H2O = a primary amine + an aldehyde + H2O2. It catalyses the reaction a primary methyl amine + O2 + H2O = an aldehyde + H2O2 + NH4(+). The enzyme catalyses serotonin + O2 + H2O = (5-hydroxyindol-3-yl)acetaldehyde + H2O2 + NH4(+). The catalysed reaction is (R)-adrenaline + O2 + H2O = (R)-3,4-dihydroxymandelaldehyde + methylamine + H2O2. It carries out the reaction dopamine + O2 + H2O = 3,4-dihydroxyphenylacetaldehyde + H2O2 + NH4(+). It catalyses the reaction tyramine + O2 + H2O = (4-hydroxyphenyl)acetaldehyde + H2O2 + NH4(+). The enzyme catalyses (R)-noradrenaline + O2 + H2O = (R)-3,4-dihydroxymandelaldehyde + H2O2 + NH4(+). The catalysed reaction is kynuramine + O2 + H2O = 3-(2-aminophenyl)-3-oxopropanal + H2O2 + NH4(+). It carries out the reaction tryptamine + O2 + H2O = indole-3-acetaldehyde + H2O2 + NH4(+). It catalyses the reaction 2-phenylethylamine + O2 + H2O = 2-phenylacetaldehyde + H2O2 + NH4(+). In terms of biological role, catalyzes the oxidative deamination of biogenic and xenobiotic amines and has important functions in the metabolism of neuroactive and vasoactive amines in the central nervous system and peripheral tissues. Preferentially oxidizes serotonin. Also catalyzes the oxidative deamination of kynuramine to 3-(2-aminophenyl)-3-oxopropanal that can spontaneously condense to 4-hydroxyquinoline. This is Amine oxidase [flavin-containing] A from Mus musculus (Mouse).